Reading from the N-terminus, the 651-residue chain is UvrABC system protein B (651 aa).

In terms of domain architecture, Helicase ATP-binding spans 25 to 178; it reads RGISCGAKEQ…CQLQERLVEL (154 aa). 38–45 lines the ATP pocket; that stretch reads GVTGSGKT. Positions 91-114 match the Beta-hairpin motif; the sequence is YYDYYQPEAYIPQSDVYIEKDALI. The 165-residue stretch at 427 to 591 folds into the Helicase C-terminal domain; it reads DGQIHDVMCE…IVPRTIQKPV (165 aa). The disordered stretch occupies residues 593 to 615; the sequence is TSLSERVGSSRKKVSRDTNTDPA. The UVR domain occupies 616–651; sequence NRDIVELQKEMLLCAENLDFERAVEIRNEIKRLTAP.

The protein belongs to the UvrB family. Forms a heterotetramer with UvrA during the search for lesions. Interacts with UvrC in an incision complex.

It localises to the cytoplasm. Its function is as follows. The UvrABC repair system catalyzes the recognition and processing of DNA lesions. A damage recognition complex composed of 2 UvrA and 2 UvrB subunits scans DNA for abnormalities. Upon binding of the UvrA(2)B(2) complex to a putative damaged site, the DNA wraps around one UvrB monomer. DNA wrap is dependent on ATP binding by UvrB and probably causes local melting of the DNA helix, facilitating insertion of UvrB beta-hairpin between the DNA strands. Then UvrB probes one DNA strand for the presence of a lesion. If a lesion is found the UvrA subunits dissociate and the UvrB-DNA preincision complex is formed. This complex is subsequently bound by UvrC and the second UvrB is released. If no lesion is found, the DNA wraps around the other UvrB subunit that will check the other stand for damage. The sequence is that of UvrABC system protein B from Anaplasma marginale (strain Florida).